The chain runs to 274 residues: Probable endonuclease LCL3 (274 aa).

Residues 15 to 32 form a helical membrane-spanning segment; that stretch reads AVLSIILTGSTLTLIYTY. The 209-residue stretch at 53-261 folds into the TNase-like domain; that stretch reads HWLYGKVTSV…RSRKKGLWIQ (209 aa). R151 is a catalytic residue. D156 serves as a coordination point for Ca(2+). Residues E159 and R199 contribute to the active site.

It belongs to the LCL3 family.

The protein localises to the mitochondrion. It localises to the membrane. The sequence is that of Probable endonuclease LCL3 (LCL3) from Saccharomyces cerevisiae (strain Lalvin EC1118 / Prise de mousse) (Baker's yeast).